Reading from the N-terminus, the 239-residue chain is Retrotransposon Gag-like protein 6 (239 aa).

A coiled-coil region spans residues 29–69 (LTSLRLTNSALRREASTLRAEKANLTNMLESVMAELTLLRT). A compositionally biased stretch (polar residues) spans 82–94 (PISSITSNGTRPM). 2 disordered regions span residues 82–106 (PISS…EPFS) and 214–239 (TGPC…ARNL). A compositionally biased stretch (low complexity) spans 228 to 239 (PAPALPARARNL).

Belongs to the LDOC1 family.

The protein is Retrotransposon Gag-like protein 6 of Homo sapiens (Human).